The following is an 861-amino-acid chain: DNA mismatch repair protein MutS (861 aa).

614-621 (GPNMGGKS) is a binding site for ATP.

It belongs to the DNA mismatch repair MutS family.

In terms of biological role, this protein is involved in the repair of mismatches in DNA. It is possible that it carries out the mismatch recognition step. This protein has a weak ATPase activity. This is DNA mismatch repair protein MutS from Mannheimia succiniciproducens (strain KCTC 0769BP / MBEL55E).